A 429-amino-acid polypeptide reads, in one-letter code: Trigger factor (429 aa).

One can recognise a PPIase FKBP-type domain in the interval 161-246; the sequence is GDRLSIDFKG…INEVALPKEP (86 aa).

It belongs to the FKBP-type PPIase family. Tig subfamily.

It localises to the cytoplasm. The enzyme catalyses [protein]-peptidylproline (omega=180) = [protein]-peptidylproline (omega=0). Functionally, involved in protein export. Acts as a chaperone by maintaining the newly synthesized protein in an open conformation. Functions as a peptidyl-prolyl cis-trans isomerase. In Ruthia magnifica subsp. Calyptogena magnifica, this protein is Trigger factor.